Here is a 64-residue protein sequence, read N- to C-terminus: Myotoxin-2 (64 aa).

The first 21 residues, 1–21 (KILYLLFAFLFLAFLSEPGNA), serve as a signal peptide directing secretion. Cys-32 and Cys-51 are oxidised to a cystine.

It belongs to the crotamine-myotoxin family. As to quaternary structure, monomer. Expressed by the venom gland.

Its subcellular location is the secreted. Cationic peptide that possesses multiple functions. It acts as a cell-penetrating peptide (CPP), and as a potent voltage-gated potassium channel (Kv) inhibitor. It exhibits antimicrobial activities, hind limb paralysis, and severe muscle necrosis by a non-enzymatic mechanism. This Crotalus durissus terrificus (South American rattlesnake) protein is Myotoxin-2.